A 155-amino-acid chain; its full sequence is Dau c 1 isoallergen Dau c 1.0401 (155 aa).

It belongs to the BetVI family. Monomer. As to expression, expressed in roots (at protein level). Expressed in roots.

The chain is Dau c 1 isoallergen Dau c 1.0401 from Daucus carota subsp. sativus (Carrot).